We begin with the raw amino-acid sequence, 91 residues long: Small ribosomal subunit protein uS19 (91 aa).

This sequence belongs to the universal ribosomal protein uS19 family.

In terms of biological role, protein S19 forms a complex with S13 that binds strongly to the 16S ribosomal RNA. This Laribacter hongkongensis (strain HLHK9) protein is Small ribosomal subunit protein uS19.